A 280-amino-acid polypeptide reads, in one-letter code: MSQSTPLTVFVLSDSVGQTALQLAQAALAQYPNVKPDIIRFPFVHSVDKLTDVLSKAVPEETIVVHTLATTGLSEIAQNYCDAKKIASFDMMSPLTKLITAKTSLAPSGEAGALHHLNDRYFDRISAMEFAVMYDDGKDPHGFLEADIVLLGVSRTSKTPLSLFLANRNIKVANLPIVPQAHIPDEIWHVDPKKIIGLMNTPEVLNNIRRERMIAYGLNPDTTYSDMDEIKAELDFAQDLYDKIGCQVINVANRSIEETAAIILEQTGLDFASSSTDHVN.

Residue 152–159 (GVSRTSKT) coordinates ADP.

Belongs to the pyruvate, phosphate/water dikinase regulatory protein family. PDRP subfamily.

The catalysed reaction is N(tele)-phospho-L-histidyl/L-threonyl-[pyruvate, phosphate dikinase] + ADP = N(tele)-phospho-L-histidyl/O-phospho-L-threonyl-[pyruvate, phosphate dikinase] + AMP + H(+). It catalyses the reaction N(tele)-phospho-L-histidyl/O-phospho-L-threonyl-[pyruvate, phosphate dikinase] + phosphate + H(+) = N(tele)-phospho-L-histidyl/L-threonyl-[pyruvate, phosphate dikinase] + diphosphate. Its function is as follows. Bifunctional serine/threonine kinase and phosphorylase involved in the regulation of the pyruvate, phosphate dikinase (PPDK) by catalyzing its phosphorylation/dephosphorylation. The chain is Putative pyruvate, phosphate dikinase regulatory protein 1 from Latilactobacillus sakei subsp. sakei (strain 23K) (Lactobacillus sakei subsp. sakei).